Consider the following 332-residue polypeptide: C4-dicarboxylate-binding periplasmic protein DctP (332 aa).

Residues 1–22 (MFKPLTLIAASILAVTSFNAAA) form the signal peptide.

The protein belongs to the bacterial solute-binding protein 7 family. The complex comprises the extracytoplasmic solute receptor protein DctP, and the two transmembrane proteins DctQ and DctM.

It is found in the periplasm. Its function is as follows. Part of the tripartite ATP-independent periplasmic (TRAP) transport system DctPQM involved in C4-dicarboxylates uptake. In Vibrio cholerae serotype O1 (strain ATCC 39315 / El Tor Inaba N16961), this protein is C4-dicarboxylate-binding periplasmic protein DctP.